Reading from the N-terminus, the 301-residue chain is Tyrosine recombinase XerD (301 aa).

The Core-binding (CB) domain occupies 7-90 (QFHTTILEQF…ALKVFFLFLK (84 aa)). One can recognise a Tyr recombinase domain in the interval 109-294 (RLPSVLTPQE…AADSLIEKFL (186 aa)). Catalysis depends on residues Arg-153, Lys-175, His-246, Arg-249, and His-272. Tyr-281 (O-(3'-phospho-DNA)-tyrosine intermediate) is an active-site residue.

This sequence belongs to the 'phage' integrase family. XerD subfamily. Forms a cyclic heterotetrameric complex composed of two molecules of XerC and two molecules of XerD.

The protein localises to the cytoplasm. Functionally, site-specific tyrosine recombinase, which acts by catalyzing the cutting and rejoining of the recombining DNA molecules. The XerC-XerD complex is essential to convert dimers of the bacterial chromosome into monomers to permit their segregation at cell division. It also contributes to the segregational stability of plasmids. In Chlamydia pneumoniae (Chlamydophila pneumoniae), this protein is Tyrosine recombinase XerD.